Here is a 153-residue protein sequence, read N- to C-terminus: LOB domain-containing protein 26 (153 aa).

An LOB domain is found at 4–105 (NPCEVCRFQN…EEVSKTKKLL (102 aa)). The disordered stretch occupies residues 126-153 (KSKPSVLRKRKRKTKSSDESAIRVVEDS). Basic and acidic residues predominate over residues 140–153 (KSSDESAIRVVEDS).

Belongs to the LOB domain-containing protein family.

The chain is LOB domain-containing protein 26 (LBD26) from Arabidopsis thaliana (Mouse-ear cress).